The chain runs to 872 residues: Alanine--tRNA ligase (872 aa).

Residues H567, H571, C669, and H673 each contribute to the Zn(2+) site.

This sequence belongs to the class-II aminoacyl-tRNA synthetase family. Zn(2+) serves as cofactor.

The protein resides in the cytoplasm. It carries out the reaction tRNA(Ala) + L-alanine + ATP = L-alanyl-tRNA(Ala) + AMP + diphosphate. Its function is as follows. Catalyzes the attachment of alanine to tRNA(Ala) in a two-step reaction: alanine is first activated by ATP to form Ala-AMP and then transferred to the acceptor end of tRNA(Ala). Also edits incorrectly charged Ser-tRNA(Ala) and Gly-tRNA(Ala) via its editing domain. This is Alanine--tRNA ligase from Streptococcus pneumoniae (strain CGSP14).